The primary structure comprises 189 residues: Orotate phosphoribosyltransferase (189 aa).

5-phospho-alpha-D-ribose 1-diphosphate is bound by residues arginine 94, lysine 95, lysine 98, and 120–128 (EDVTTTGGS). Residues threonine 124 and arginine 152 each coordinate orotate.

This sequence belongs to the purine/pyrimidine phosphoribosyltransferase family. PyrE subfamily. As to quaternary structure, homodimer. It depends on Mg(2+) as a cofactor.

It carries out the reaction orotidine 5'-phosphate + diphosphate = orotate + 5-phospho-alpha-D-ribose 1-diphosphate. It participates in pyrimidine metabolism; UMP biosynthesis via de novo pathway; UMP from orotate: step 1/2. Functionally, catalyzes the transfer of a ribosyl phosphate group from 5-phosphoribose 1-diphosphate to orotate, leading to the formation of orotidine monophosphate (OMP). This chain is Orotate phosphoribosyltransferase, found in Thermococcus gammatolerans (strain DSM 15229 / JCM 11827 / EJ3).